The following is a 139-amino-acid chain: Nuclear receptor 2C2-associated protein (139 aa).

Belongs to the NR2C2AP family. Interacts with NR2C2/TR4. As to expression, expressed in all tissues examined, with highest expression in heart, skeletal muscle and pancreas.

Its subcellular location is the nucleus. Its function is as follows. May act as a repressor of NR2C2-mediated transactivation by suppressing the binding between NR2C2/TR4 and the TR4-response element in target genes. In Homo sapiens (Human), this protein is Nuclear receptor 2C2-associated protein (NR2C2AP).